The chain runs to 515 residues: Zinc metalloproteinase-disintegrin BA-5A (515 aa).

Residues 1–20 form the signal peptide; it reads MMQVLLVTICLAVFPYQGSS. Residues 21-193 constitute a propeptide that is removed on maturation; it reads IILESGNVND…KEASQLVATS (173 aa). A Peptidase M12B domain is found at 203-399; sequence RYIKYFIVVD…YKPDCTLIRP (197 aa). Asparagine 263 carries N-linked (GlcNAc...) asparagine glycosylation. 11 disulfide bridges follow: cysteine 314–cysteine 394, cysteine 354–cysteine 378, cysteine 356–cysteine 361, cysteine 410–cysteine 429, cysteine 421–cysteine 439, cysteine 423–cysteine 434, cysteine 433–cysteine 456, cysteine 447–cysteine 453, cysteine 452–cysteine 478, cysteine 465–cysteine 485, and cysteine 472–cysteine 497. Zn(2+) is bound at residue histidine 339. Residue glutamate 340 is part of the active site. Zn(2+)-binding residues include histidine 343 and histidine 349. A glycan (N-linked (GlcNAc...) asparagine) is linked at asparagine 377. Positions 407–493 constitute a Disintegrin domain; the sequence is PPVCGNDILE…DCPIDHFHRN (87 aa). The short motif at 471–473 is the D/ECD-tripeptide element; sequence ECD.

The protein belongs to the venom metalloproteinase (M12B) family. P-II subfamily. In terms of assembly, monomer. It depends on Zn(2+) as a cofactor. Expressed by the venom gland.

It is found in the secreted. In terms of biological role, snake venom zinc metalloprotease that possesses hemorrhagic activity and degrades alpha chain of fibrinogen (FGA). May inhibit alpha-2/beta-1 integrin (ITGA2/ITGB1). The polypeptide is Zinc metalloproteinase-disintegrin BA-5A (Bitis arietans (African puff adder)).